We begin with the raw amino-acid sequence, 337 residues long: Phytanoyl-CoA dioxygenase, peroxisomal (337 aa).

The N-terminal 30 residues, Met1–Thr30, are a transit peptide targeting the peroxisome. N6-succinyllysine is present on residues Lys59 and Lys108. 2-oxoglutarate-binding positions include Lys120, Met157, His175–Asp177, and Trp193. Residues His175 and Asp177 each coordinate Fe cation. Lys252 is subject to N6-succinyllysine. His264 contributes to the Fe cation binding site. 2-oxoglutarate is bound by residues Ser266 and Arg275.

The protein belongs to the PhyH family. In terms of assembly, interacts with FKBP52 and PHYHIP. It depends on Fe cation as a cofactor. The cofactor is L-ascorbate. ATP is required as a cofactor. Mg(2+) serves as cofactor.

Its subcellular location is the peroxisome. It catalyses the reaction phytanoyl-CoA + 2-oxoglutarate + O2 = 2-hydroxyphytanoyl-CoA + succinate + CO2. The enzyme catalyses 3-methylhexadecanoyl-CoA + 2-oxoglutarate + O2 = 2-hydroxy-3-methylhexadecanoyl-CoA + succinate + CO2. The catalysed reaction is hexadecanoyl-CoA + 2-oxoglutarate + O2 = 2-hydroxyhexadecanoyl-CoA + succinate + CO2. It carries out the reaction octanoyl-CoA + 2-oxoglutarate + O2 = 2-hydroxyoctanoyl-CoA + succinate + CO2. It catalyses the reaction decanoyl-CoA + 2-oxoglutarate + O2 = 2-hydroxydecanoyl-CoA + succinate + CO2. The enzyme catalyses 3-methylbutanoyl-CoA + 2-oxoglutarate + O2 = 2-hydroxy-3-methylbutanoyl-CoA + succinate + CO2. The catalysed reaction is heptadecanoyl-CoA + 2-oxoglutarate + O2 = 2-hydroxyheptadecanoyl-CoA + succinate + CO2. It carries out the reaction eicosanoyl-CoA + 2-oxoglutarate + O2 = 2-hydroxyeicosanoyl-CoA + succinate + CO2. It catalyses the reaction octadecanoyl-CoA + 2-oxoglutarate + O2 = 2-hydroxyoctadecanoyl-CoA + succinate + CO2. The enzyme catalyses dodecanoyl-CoA + 2-oxoglutarate + O2 = 2-hydroxydodecanoyl-CoA + succinate + CO2. The catalysed reaction is tetradecanoyl-CoA + 2-oxoglutarate + O2 = 2-hydroxytetradecanoyl-CoA + succinate + CO2. It carries out the reaction hexanoyl-CoA + 2-oxoglutarate + O2 = 2-hydroxyhexanoyl-CoA + succinate + CO2. It catalyses the reaction butanoyl-CoA + 2-oxoglutarate + O2 = 2-hydroxybutanoyl-CoA + succinate + CO2. The enzyme catalyses 3-methylnonanoyl-CoA + 2-oxoglutarate + O2 = 2-hydroxy-3-methylnonanoyl-CoA + succinate + CO2. The catalysed reaction is 3-methylundecanoyl-CoA + 2-oxoglutarate + O2 = 2-hydroxy-3-methylundecanoyl-CoA + succinate + CO2. It carries out the reaction 3-methyldodecanoyl-CoA + 2-oxoglutarate + O2 = 2-hydroxy-3-methyldodecanoyl-CoA + succinate + CO2. It participates in lipid metabolism; fatty acid metabolism. In terms of biological role, catalyzes the 2-hydroxylation of not only racemic phytanoyl-CoA and the isomers of 3-methylhexadecanoyl-CoA, but also a variety of other mono- branched 3-methylacyl-CoA esters (with a chain length of at least seven carbon atoms) and straight-chain acyl-CoA esters (with a chain length longer than four carbon atoms). Does not hydroxylate long and very long straight chain acyl-CoAs or 2-methyl-and 4-methyl-branched acyl-CoAs. This chain is Phytanoyl-CoA dioxygenase, peroxisomal (PHYH), found in Bos taurus (Bovine).